A 136-amino-acid chain; its full sequence is Acyl carrier protein 2, chloroplastic (136 aa).

Residues 1–51 (MASIAASASISLQARPRQLAIAASQVKSFSNGRRSSLSFNLRQLPTRLTVS) constitute a chloroplast transit peptide. One can recognise a Carrier domain in the interval 56 to 131 (PETVDKVCAV…QAAALIEELL (76 aa)). Residue serine 91 is modified to O-(pantetheine 4'-phosphoryl)serine.

This sequence belongs to the acyl carrier protein (ACP) family. In terms of processing, 4'-phosphopantetheine is transferred from CoA to a specific serine of apo-ACP by acpS. This modification is essential for activity because fatty acids are bound in thioester linkage to the sulfhydryl of the prosthetic group.

The protein localises to the plastid. It is found in the chloroplast. Carrier of the growing fatty acid chain in fatty acid biosynthesis. This chain is Acyl carrier protein 2, chloroplastic (ACP2), found in Arabidopsis thaliana (Mouse-ear cress).